The following is a 501-amino-acid chain: Aspartate--tRNA ligase, cytoplasmic (501 aa).

The residue at position 52 (Thr-52) is a Phosphothreonine. Lys-74 bears the N6-acetyllysine mark. Residue Glu-229 participates in L-aspartate binding. Ser-249 bears the Phosphoserine mark. The aspartate stretch occupies residues 251–254 (QLYK). Arg-273 lines the L-aspartate pocket. ATP-binding positions include 273-275 (RAE) and 281-283 (RHL). Lys-374 bears the N6-acetyllysine mark. Glu-424 serves as a coordination point for ATP. L-aspartate is bound by residues Ser-427 and Arg-431. Position 472–475 (472–475 (GLER)) interacts with ATP.

This sequence belongs to the class-II aminoacyl-tRNA synthetase family. Type 2 subfamily. Homodimer. Part of a multisubunit complex that groups tRNA ligases for Arg (RARS1), Asp (DARS1), Gln (QARS1), Ile (IARS1), Leu (LARS1), Lys (KARS1), Met (MARS1) the bifunctional ligase for Glu and Pro (EPRS1) and the auxiliary subunits AIMP1/p43, AIMP2/p38 and EEF1E1/p18.

The protein localises to the cytoplasm. It carries out the reaction tRNA(Asp) + L-aspartate + ATP = L-aspartyl-tRNA(Asp) + AMP + diphosphate. In terms of biological role, catalyzes the specific attachment of an amino acid to its cognate tRNA in a 2 step reaction: the amino acid (AA) is first activated by ATP to form AA-AMP and then transferred to the acceptor end of the tRNA. This Mus musculus (Mouse) protein is Aspartate--tRNA ligase, cytoplasmic (Dars1).